Here is a 114-residue protein sequence, read N- to C-terminus: Probable divalent-cation tolerance protein cutA homolog (114 aa).

This sequence belongs to the CutA family. In terms of assembly, homotrimer.

In Encephalitozoon cuniculi (strain GB-M1) (Microsporidian parasite), this protein is Probable divalent-cation tolerance protein cutA homolog.